Reading from the N-terminus, the 196-residue chain is Protein hunchback (196 aa).

Disordered stretches follow at residues 16 to 56 (SHHH…SHTN), 63 to 82 (LKQQQQQQQQHQHQQQQQPM), and 156 to 196 (LTPP…KYMA). Over residues 17 to 29 (HHHHHHHAHHSHH) the composition is skewed to basic residues. 2 stretches are compositionally biased toward low complexity: residues 33–43 (SNSNASNSPHQ) and 65–80 (QQQQQQQQHQHQQQQQ). The segment covering 177–196 (EPEKEHDLMSNSSEDMKYMA) has biased composition (basic and acidic residues).

It belongs to the hunchback C2H2-type zinc-finger protein family.

The protein localises to the nucleus. Functionally, gap class segmentation protein that controls development of head structures. The polypeptide is Protein hunchback (hb) (Drosophila adunca (Fruit fly)).